Consider the following 861-residue polypeptide: Integrator complex subunit 6-like (861 aa).

A VWFA domain is found at 3–227 (ILLFLIDTSA…QCLESLVQKV (225 aa)). The residue at position 617 (Ser-617) is a Phosphoserine.

The chain is Integrator complex subunit 6-like (Ints6l) from Mus musculus (Mouse).